The primary structure comprises 396 residues: 2,3-diketo-5-methylthiopentyl-1-phosphate enolase (396 aa).

The active-site Proton acceptor is the K85. Residues K134, 160–163 (KDDE), H251, G323, and 345–346 (GG) contribute to the substrate site. The Mg(2+) site is built by K160, D162, and E163. K160 carries the post-translational modification N6-carboxylysine.

Belongs to the RuBisCO large chain family. Type IV subfamily. As to quaternary structure, homodimer. It depends on Mg(2+) as a cofactor.

The enzyme catalyses 5-methylsulfanyl-2,3-dioxopentyl phosphate = 2-hydroxy-5-methylsulfanyl-3-oxopent-1-enyl phosphate. Its pathway is amino-acid biosynthesis; L-methionine biosynthesis via salvage pathway; L-methionine from S-methyl-5-thio-alpha-D-ribose 1-phosphate: step 3/6. Catalyzes the enolization of 2,3-diketo-5-methylthiopentyl-1-phosphate (DK-MTP-1-P) into 2-hydroxy-3-keto-5-methylthiopentenyl-1-phosphate (HK-MTPenyl-1-P). This Exiguobacterium sibiricum (strain DSM 17290 / CCUG 55495 / CIP 109462 / JCM 13490 / 255-15) protein is 2,3-diketo-5-methylthiopentyl-1-phosphate enolase.